The primary structure comprises 224 residues: Adenylate kinase (224 aa).

Position 10–15 (10–15 (GSGKST)) interacts with ATP. Residues 30–59 (SSGDLIRREIERKSSLGREMEAYLSRGDLI) form an NMP region. Residues Ser31, Arg36, 57-59 (DLI), 83-86 (GYPR), and Gln90 each bind AMP. Residues 124–161 (GRRICPNCGAVYHVKYNPPKVPGICDVCGSELIQRADD) form an LID region. Residue Arg125 coordinates ATP. Positions 128 and 131 each coordinate Zn(2+). 134 to 135 (VY) lines the ATP pocket. Cys148 and Cys151 together coordinate Zn(2+). AMP-binding residues include Arg158 and Arg169. Position 197 (Gly197) interacts with ATP.

Belongs to the adenylate kinase family. As to quaternary structure, monomer.

It is found in the cytoplasm. The catalysed reaction is AMP + ATP = 2 ADP. Its pathway is purine metabolism; AMP biosynthesis via salvage pathway; AMP from ADP: step 1/1. Functionally, catalyzes the reversible transfer of the terminal phosphate group between ATP and AMP. Plays an important role in cellular energy homeostasis and in adenine nucleotide metabolism. The polypeptide is Adenylate kinase (Thermococcus kodakarensis (strain ATCC BAA-918 / JCM 12380 / KOD1) (Pyrococcus kodakaraensis (strain KOD1))).